Here is a 65-residue protein sequence, read N- to C-terminus: Large ribosomal subunit protein bL35 (65 aa).

It belongs to the bacterial ribosomal protein bL35 family.

This is Large ribosomal subunit protein bL35 from Xanthomonas campestris pv. campestris (strain ATCC 33913 / DSM 3586 / NCPPB 528 / LMG 568 / P 25).